Here is a 922-residue protein sequence, read N- to C-terminus: Cell surface glycoprotein 2 (922 aa).

The signal sequence occupies residues 1-23 (MTGNSDKVRSLFLTALMVFSVFA). N-linked (GlcNAc...) asparagine glycosylation is found at Asn37, Asn56, Asn110, Asn220, Asn251, Asn262, and Asn292. Residue Asn307 is glycosylated (N-linked (GalNAc...) asparagine). N-linked (GlcNAc...) asparagine glycosylation is found at Asn319, Asn344, Asn396, Asn437, Asn490, Asn523, Asn557, Asn574, Asn587, Asn616, Asn700, Asn717, Asn809, Asn838, and Asn847. The segment at 816-899 (PHQDTNGNEE…GTETTEAEGP (84 aa)) is disordered. Residues 835 to 850 (YTQNGSAVTDSANVTV) are compositionally biased toward polar residues. The segment covering 853-887 (EEPEDTPEDTPEDTPEDTPEDTPEDTPADTPEDTP) has biased composition (acidic residues). A compositionally biased stretch (low complexity) spans 888–899 (DTGTETTEAEGP). The helical transmembrane segment at 898–918 (GPGFTAAIALIALVAAALLAV) threads the bilayer. The PGF sorting signal signature appears at 899-901 (PGF).

It belongs to the halobacterial S-layer protein family. In terms of processing, N-glycosylated on Asn-307; this N-linked glycan is a branched trisaccharide containing 2-amino-6-sulfo-2,6-dideoxy-glucose (sulfoquinovosamine). O-glycosylated on Thr residues within the DTPE repeats in the C-terminal region; glycans consist of Glc-Gal disaccharides. Post-translationally, cleaved by the archaeosortase ArtA at the C-terminus, with removal of a short hydrophobic segment. In terms of processing, lipidation.

It is found in the secreted. Its subcellular location is the cell wall. The protein localises to the S-layer. It localises to the cell membrane. In terms of biological role, S-layer protein. The S-layer is a paracrystalline mono-layered assembly of proteins which coat the surface of the cell. In H.hispanica, the S-layer contains two different glycoproteins, Slg1 and Slg2, which share highly similar amino acid sequences. This Haloarcula hispanica (strain ATCC 33960 / DSM 4426 / JCM 8911 / NBRC 102182 / NCIMB 2187 / VKM B-1755) protein is Cell surface glycoprotein 2.